Here is a 591-residue protein sequence, read N- to C-terminus: Aspartate--tRNA(Asp/Asn) ligase (591 aa).

Glu-174 lines the L-aspartate pocket. Positions 198–201 (QLFK) are aspartate. L-aspartate is bound at residue Arg-220. ATP is bound by residues 220–222 (RDE) and Gln-229. His-450 contributes to the L-aspartate binding site. ATP is bound at residue Glu-483. L-aspartate is bound at residue Arg-490. 535-538 (GLDR) is an ATP binding site.

Belongs to the class-II aminoacyl-tRNA synthetase family. Type 1 subfamily. As to quaternary structure, homodimer.

The protein localises to the cytoplasm. The enzyme catalyses tRNA(Asx) + L-aspartate + ATP = L-aspartyl-tRNA(Asx) + AMP + diphosphate. In terms of biological role, aspartyl-tRNA synthetase with relaxed tRNA specificity since it is able to aspartylate not only its cognate tRNA(Asp) but also tRNA(Asn). Reaction proceeds in two steps: L-aspartate is first activated by ATP to form Asp-AMP and then transferred to the acceptor end of tRNA(Asp/Asn). This chain is Aspartate--tRNA(Asp/Asn) ligase, found in Pseudomonas aeruginosa (strain LESB58).